A 530-amino-acid chain; its full sequence is Glucose-6-phosphate isomerase (530 aa).

The active-site Proton donor is glutamate 322. Catalysis depends on residues histidine 351 and lysine 455.

Belongs to the GPI family.

Its subcellular location is the cytoplasm. The catalysed reaction is alpha-D-glucose 6-phosphate = beta-D-fructose 6-phosphate. It functions in the pathway carbohydrate biosynthesis; gluconeogenesis. It participates in carbohydrate degradation; glycolysis; D-glyceraldehyde 3-phosphate and glycerone phosphate from D-glucose: step 2/4. In terms of biological role, catalyzes the reversible isomerization of glucose-6-phosphate to fructose-6-phosphate. This chain is Glucose-6-phosphate isomerase, found in Geobacter sp. (strain M21).